Consider the following 853-residue polypeptide: Aminotransferase PigE (853 aa).

A pyridoxal 5'-phosphate-binding site is contributed by 503–504 (GT). Lysine 645 bears the N6-(pyridoxal phosphate)lysine mark. Threonine 680 is a binding site for pyridoxal 5'-phosphate.

This sequence belongs to the class-III pyridoxal-phosphate-dependent aminotransferase family. Homodimer. Pyridoxal 5'-phosphate is required as a cofactor.

It functions in the pathway antibiotic biosynthesis; prodigiosin biosynthesis. Functionally, involved in the biosynthesis of 2-methyl-3-n-amyl-pyrrole (MAP), one of the terminal products involved in the biosynthesis of the red antibiotic prodigiosin (Pig). Catalyzes the transamination to the aldehyde group of 3-acetyloctanal, resulting in an aminoketone, which spontaneously cyclizes to yield the dihydro form of MAP (H2MAP). In Serratia sp. (strain FS14), this protein is Aminotransferase PigE.